The following is a 383-amino-acid chain: Alkanesulfonate monooxygenase (383 aa).

The protein belongs to the SsuD family. As to quaternary structure, homotetramer.

It carries out the reaction an alkanesulfonate + FMNH2 + O2 = an aldehyde + FMN + sulfite + H2O + 2 H(+). In terms of biological role, catalyzes the desulfonation of aliphatic sulfonates. The polypeptide is Alkanesulfonate monooxygenase (Erwinia pyrifoliae (strain DSM 12163 / CIP 106111 / Ep16/96)).